A 125-amino-acid polypeptide reads, in one-letter code: UPF0231 protein HD_1708 (125 aa).

The protein belongs to the UPF0231 family.

This is UPF0231 protein HD_1708 from Haemophilus ducreyi (strain 35000HP / ATCC 700724).